The chain runs to 329 residues: Phenylalanine--tRNA ligase alpha subunit (329 aa).

E254 contacts Mg(2+).

The protein belongs to the class-II aminoacyl-tRNA synthetase family. Phe-tRNA synthetase alpha subunit type 1 subfamily. As to quaternary structure, tetramer of two alpha and two beta subunits. Mg(2+) is required as a cofactor.

The protein resides in the cytoplasm. It carries out the reaction tRNA(Phe) + L-phenylalanine + ATP = L-phenylalanyl-tRNA(Phe) + AMP + diphosphate + H(+). This chain is Phenylalanine--tRNA ligase alpha subunit, found in Haemophilus influenzae (strain PittEE).